Consider the following 515-residue polypeptide: Bifunctional purine biosynthesis protein PurH (515 aa).

An MGS-like domain is found at M1–V145.

This sequence belongs to the PurH family.

It carries out the reaction (6R)-10-formyltetrahydrofolate + 5-amino-1-(5-phospho-beta-D-ribosyl)imidazole-4-carboxamide = 5-formamido-1-(5-phospho-D-ribosyl)imidazole-4-carboxamide + (6S)-5,6,7,8-tetrahydrofolate. The catalysed reaction is IMP + H2O = 5-formamido-1-(5-phospho-D-ribosyl)imidazole-4-carboxamide. The protein operates within purine metabolism; IMP biosynthesis via de novo pathway; 5-formamido-1-(5-phospho-D-ribosyl)imidazole-4-carboxamide from 5-amino-1-(5-phospho-D-ribosyl)imidazole-4-carboxamide (10-formyl THF route): step 1/1. Its pathway is purine metabolism; IMP biosynthesis via de novo pathway; IMP from 5-formamido-1-(5-phospho-D-ribosyl)imidazole-4-carboxamide: step 1/1. The sequence is that of Bifunctional purine biosynthesis protein PurH from Streptococcus pyogenes serotype M2 (strain MGAS10270).